The sequence spans 119 residues: uncharacterized protein (119 aa).

This is an uncharacterized protein from Shigella flexneri.